A 71-amino-acid polypeptide reads, in one-letter code: UPF0346 protein SSU05_1322 (71 aa).

The protein belongs to the UPF0346 family.

The sequence is that of UPF0346 protein SSU05_1322 from Streptococcus suis (strain 05ZYH33).